Consider the following 345-residue polypeptide: N-acetyl-gamma-glutamyl-phosphate reductase (345 aa).

The active site involves C149.

It belongs to the NAGSA dehydrogenase family. Type 1 subfamily.

It is found in the cytoplasm. The enzyme catalyses N-acetyl-L-glutamate 5-semialdehyde + phosphate + NADP(+) = N-acetyl-L-glutamyl 5-phosphate + NADPH + H(+). The protein operates within amino-acid biosynthesis; L-arginine biosynthesis; N(2)-acetyl-L-ornithine from L-glutamate: step 3/4. Functionally, catalyzes the NADPH-dependent reduction of N-acetyl-5-glutamyl phosphate to yield N-acetyl-L-glutamate 5-semialdehyde. This chain is N-acetyl-gamma-glutamyl-phosphate reductase, found in Marinobacter nauticus (strain ATCC 700491 / DSM 11845 / VT8) (Marinobacter aquaeolei).